We begin with the raw amino-acid sequence, 486 residues long: ATP-dependent rRNA helicase rrp3 (486 aa).

A disordered region spans residues 1–60 (MSSVKRRKTDKNPSLEGLKSKKTKESKKESHTPSPEPIEDTEDNRVIEETEEAEEDDAPK). The Q motif signature appears at 60 to 88 (KSFKDLGIVDSLCEACDTLGYKAPTPIQR). The 172-residue stretch at 91 to 262 (IPLALQGRDL…RASLKDPLRV (172 aa)) folds into the Helicase ATP-binding domain. ATP is bound at residue 104–111 (AETGSGKT). Residues 210 to 213 (DEAD) carry the DEAD box motif. Positions 286–434 (HKDTYLIYLL…EYPTVKDEVM (149 aa)) constitute a Helicase C-terminal domain. 2 stretches are compositionally biased toward basic and acidic residues: residues 447–460 (ARNE…DRGK) and 476–486 (RGRDEMDREEG). Residues 447–486 (ARNEMKNLHEDRGKKGAVLKGRRPANGAKRGRDEMDREEG) form a disordered region.

Belongs to the DEAD box helicase family. DDX47/RRP3 subfamily. Interacts with the SSU processome.

The protein localises to the nucleus. It catalyses the reaction ATP + H2O = ADP + phosphate + H(+). Its function is as follows. ATP-dependent rRNA helicase required for pre-ribosomal RNA processing. Involved in the maturation of the 35S-pre-rRNA and to its cleavage to mature 18S rRNA. The protein is ATP-dependent rRNA helicase rrp3 of Botryotinia fuckeliana (strain B05.10) (Noble rot fungus).